We begin with the raw amino-acid sequence, 490 residues long: MMERSQILTERQQSELNKAIIQYLQPICSQENNEVLDKLTSMLKIESTELDGSDIVDNYLEKKWSTVLRLQKKIIDLENEIHNLTNIINTTNSETNGVVLSKDKINWIPKGASKQTYQCENVVATVRLHPNLPLVFNGCNDGNLYIWNLTNDDNTIPEKRIKAHTRSINKMCFSYRKPYYLATCSSDLTIKIWDEKFNHIRTLNGHEHTVSSVKFSPSDSNILYSVSRDKNIRVWDISQGVCLKSFVGHSEWCRDLDAVASETQGDFVLTCSNDQSARLSHINSGVGVAMFVGHTHVVESVKFLPKIQANELIDEYITKNIDQFPSIPSELLKDPIYDELGFKYCVSASRDNTIKLWLIPPPTLIPHRSPLPSKYNNSQGWLIAEFKGHSSWVKCLSVHPNGKFIISGSDDKTIKFWDLSGLIETGSVTAIKTISGHEGFINDIDFARLTDSESNTDKELTSEEYLKDVEKRMRCLFISGSADNSIKLWS.

Positions 65 to 96 form a coiled coil; the sequence is STVLRLQKKIIDLENEIHNLTNIINTTNSETN. WD repeat units follow at residues 118-157, 163-204, 205-245, 251-290, 293-327, 328-367, 388-427, and 436-487; these read QCEN…NTIP, AHTR…RTLN, GHEH…CLKS, EWCR…GVAM, GHTH…FPSI, PSEL…LIPH, GHSS…ETGS, and GHEG…NSIK.

It belongs to the WD repeat LIS1/nudF family. As to quaternary structure, self-associates. Interacts with NDL1 and dynein.

It is found in the cytoplasm. It localises to the cytoskeleton. Its subcellular location is the spindle pole. Its function is as follows. Positively regulates the activity of the minus-end directed microtubule motor protein dynein. Plays a central role in positioning the mitotic spindle at the bud neck during cell division. Targets cytoplasmic dynein to microtubule plus ends, thereby promoting dynein-mediated microtubule sliding along the bud cortex and consequently the movement of the mitotic spindle to the bud neck. The polypeptide is Nuclear distribution protein PAC1 (Candida tropicalis (strain ATCC MYA-3404 / T1) (Yeast)).